A 131-amino-acid polypeptide reads, in one-letter code: Small ribosomal subunit protein uS11 (131 aa).

Belongs to the universal ribosomal protein uS11 family. As to quaternary structure, part of the 30S ribosomal subunit. Interacts with proteins S7 and S18. Binds to IF-3.

Its function is as follows. Located on the platform of the 30S subunit, it bridges several disparate RNA helices of the 16S rRNA. Forms part of the Shine-Dalgarno cleft in the 70S ribosome. This chain is Small ribosomal subunit protein uS11, found in Bacillus licheniformis (strain ATCC 14580 / DSM 13 / JCM 2505 / CCUG 7422 / NBRC 12200 / NCIMB 9375 / NCTC 10341 / NRRL NRS-1264 / Gibson 46).